The chain runs to 473 residues: Protein translocase subunit SecD (473 aa).

6 helical membrane-spanning segments follow: residues 5–25 (VLVKWAVILVALFASVYLLYP), 316–336 (ASLYGIVIILILMAIYYKSGG), 337–357 (IISNIALILNLVFLLAAMAAF), 364–384 (PGIAGIILSLAMAIDANVLIL), 409–429 (WSAIFDSNFTSWIVALFLFQF), and 436–456 (GFAVTLTLGLLIGVFTSVFVT).

Belongs to the SecD/SecF family. SecD subfamily. Forms a complex with SecF. Part of the essential Sec protein translocation apparatus which comprises SecA, SecYEG and auxiliary proteins SecDF. Other proteins may also be involved.

It is found in the cell inner membrane. Its function is as follows. Part of the Sec protein translocase complex. Interacts with the SecYEG preprotein conducting channel. SecDF uses the proton motive force (PMF) to complete protein translocation after the ATP-dependent function of SecA. This chain is Protein translocase subunit SecD, found in Elusimicrobium minutum (strain Pei191).